We begin with the raw amino-acid sequence, 319 residues long: Protein quaking-B (319 aa).

The 67-residue stretch at 87–153 (YVPVKEYPDF…WEHLNEDLHV (67 aa)) folds into the KH domain. The short motif at 276–279 (PQTP) is the SH3-binding element.

The protein belongs to the quaking family. Homodimer; does not require RNA to homodimerize.

It localises to the cytoplasm. Its subcellular location is the nucleus. Its function is as follows. RNA reader protein, which recognizes and binds specific RNAs, thereby regulating RNA metabolic processes, such as pre-mRNA splicing, circular RNA (circRNA) formation, mRNA export, mRNA stability and/or translation. Involved in various cellular processes, such as mRNA storage into stress granules, apoptosis, interferon response, glial cell fate and development. Binds to the 5'-NACUAAY-N(1,20)-UAAY-3' RNA core sequence. Acts as a mRNA modification reader that specifically recognizes and binds mRNA transcripts modified by internal N(7)-methylguanine (m7G). Promotes the formation of circular RNAs (circRNAs): acts by binding to sites flanking circRNA-forming exons. CircRNAs are produced by back-splicing circularization of pre-mRNAs. Required to protect and promote stability of mRNAs which promotes oligodendrocyte differentiation. Acts as an important regulator of muscle development: required during early skeletal myofibril formation by regulating the accumulation of the muscle-specific tropomyosin-3 (tpm3) transcripts. The sequence is that of Protein quaking-B (qki2) from Danio rerio (Zebrafish).